Here is a 374-residue protein sequence, read N- to C-terminus: Trichodiene synthase (374 aa).

Mg(2+) is bound by residues Asp-100, Glu-164, Asn-225, Ser-229, Glu-233, Asp-239, and Ile-241. An aspartate-rich domain region spans residues 100–104 (DDSKD).

It belongs to the trichodiene synthase family. Mg(2+) is required as a cofactor. Mn(2+) serves as cofactor.

The enzyme catalyses (2E,6E)-farnesyl diphosphate = trichodiene + diphosphate. Its pathway is sesquiterpene biosynthesis; trichothecene biosynthesis. With respect to regulation, benzyl triethylammonium cation (BTAC) acts as a competitive inhibitor of trichodiene synthase reaction in the presence of pyrophosphate (PPi). Trichodiene synthase; part of the core gene cluster that mediates the biosynthesis of trichothecenes, a very large family of chemically related bicyclic sesquiterpene compounds acting as mycotoxins, including T2-toxin. The biosynthesis of trichothecenes begins with the cyclization of farnesyl diphosphate to trichodiene and is catalyzed by the trichodiene synthase TRI5. Trichodiene undergoes a series of oxygenations catalyzed by the cytochrome P450 monooxygenase TRI4. TRI4 controls the addition of four oxygens at C-2, C-3, C-11, and the C-12, C-13-epoxide to form the intermediate isotrichotriol. Isotrichotriol then undergoes a non-enzymatic isomerization and cyclization to form isotrichodermol. During this process, the oxygen at the C-2 position becomes the pyran ring oxygen and the hydroxyl group at C-11 is lost. More complex type A trichothecenes are built by modifying isotrichodermol through a series of paired hydroxylation and acetylation or acylation steps. Isotrichodermol is converted to isotrichodermin by the acetyltransferase TRI101. TRI101 encodes a C-3 transacetylase that acts as a self-protection or resistance factor during biosynthesis and that the presence of a free C-3 hydroxyl group is a key component of Fusarium trichothecene phytotoxicity. A second hydroxyl group is added to C-15 by the trichothecene C-15 hydroxylase TRI11, producing 15-decalonectrin, which is then acetylated by TRI3, producing calonectrin. A third hydroxyl group is added at C-4 by the cytochrome P450 monooxygenase TRI13, converting calonectrin to 3,15-diacetoxyspirpenol, which is subsequently acetylated by the acetyltransferase TRI7. A fourth hydroxyl group is added to C-8 by the cytochrome P450 monooxygenase TRI1, followed by the addition of an isovaleryl moiety by TRI16. Finally, the acetyl group is removed from the C-3 position by the trichothecene C-3 esterase TRI8 to produce T-2 toxin. This Fusarium sporotrichioides protein is Trichodiene synthase.